Reading from the N-terminus, the 102-residue chain is Keratinocyte differentiation-associated protein (102 aa).

The N-terminal stretch at 1 to 22 (MKIPILPVVALLSLLALHAVQG) is a signal peptide.

In terms of tissue distribution, expression restricted to suprabasal keratinocytes of the epidermis.

It localises to the secreted. In terms of biological role, may act as a soluble regulator of keratinocyte differentiation. May play an important role in embryonic skin morphogenesis. This is Keratinocyte differentiation-associated protein from Mus musculus (Mouse).